We begin with the raw amino-acid sequence, 224 residues long: Iron-sulfur cluster repair protein ScdA (224 aa).

Belongs to the RIC family. ScdA subfamily. In terms of assembly, homodimer.

The protein localises to the cytoplasm. Di-iron-containing protein involved in the repair of iron-sulfur clusters damaged by oxidative and nitrosative stress conditions. The protein is Iron-sulfur cluster repair protein ScdA of Staphylococcus epidermidis (strain ATCC 35984 / DSM 28319 / BCRC 17069 / CCUG 31568 / BM 3577 / RP62A).